The sequence spans 434 residues: Nicotinate phosphoribosyltransferase (434 aa).

His-242 is subject to Phosphohistidine; by autocatalysis.

Belongs to the NAPRTase family. In terms of processing, transiently phosphorylated on a His residue during the reaction cycle. Phosphorylation strongly increases the affinity for substrates and increases the rate of nicotinate D-ribonucleotide production. Dephosphorylation regenerates the low-affinity form of the enzyme, leading to product release.

It catalyses the reaction nicotinate + 5-phospho-alpha-D-ribose 1-diphosphate + ATP + H2O = nicotinate beta-D-ribonucleotide + ADP + phosphate + diphosphate. It participates in cofactor biosynthesis; NAD(+) biosynthesis; nicotinate D-ribonucleotide from nicotinate: step 1/1. Catalyzes the synthesis of beta-nicotinate D-ribonucleotide from nicotinate and 5-phospho-D-ribose 1-phosphate at the expense of ATP. This chain is Nicotinate phosphoribosyltransferase, found in Sinorhizobium medicae (strain WSM419) (Ensifer medicae).